The primary structure comprises 704 residues: Seven transmembrane domain-containing serine/threonine-protein kinase 2 (704 aa).

Topologically, residues 1-5 are extracellular; it reads MPSKE. The helical transmembrane segment at 6–26 threads the bilayer; sequence FIIPLILLCFYSVNGFVAVIS. Residues 27-42 are Cytoplasmic-facing; that stretch reads SLVELFIHKASWNSIK. Residues 43-63 traverse the membrane as a helical segment; sequence IFFYSLLILQCLCRCIIIGWG. The Extracellular segment spans residues 64 to 76; sequence MIETVQGGEFYSN. Residues 77–97 traverse the membrane as a helical segment; sequence FPSLLFISYAGLVALQMIQFL. The Cytoplasmic segment spans residues 98–121; it reads PNDNQYLLLSEGKKNNHKVKVGTN. The helical transmembrane segment at 122 to 142 threads the bilayer; it reads ILIFFNLFMYFGMFLLFGIAE. Over 143 to 185 the chain is Extracellular; the sequence is KQVGNSTSFNHHGNHNSTTSTSTDEIPLVSTEVGELYLFGDKD. Residues Asn147 and Asn158 are each glycosylated (N-linked (GlcNAc...) asparagine). The helical transmembrane segment at 186–206 threads the bilayer; sequence PIYIVLDCFYFVCLLLLLIFH. Residues 207 to 224 are Cytoplasmic-facing; that stretch reads SYVGWKTYKRNKDLFGIK. Residues 225-245 form a helical membrane-spanning segment; the sequence is LNVIHLILLICIFIRSLLVII. At 246 to 265 the chain is on the extracellular side; that stretch reads DPSSPNNSILHIDTESWLIY. Residue Asn251 is glycosylated (N-linked (GlcNAc...) asparagine). The chain crosses the membrane as a helical span at residues 266 to 286; sequence IYTISYYVVGEIIPGMLLIVI. Topologically, residues 287 to 704 are cytoplasmic; that stretch reads EFLLPYHKRK…WSIEKDSSSK (418 aa). A Protein kinase domain is found at 317–682; it reads IAIHELLGMG…SLGVKFHLAN (366 aa). Residues 323 to 331 and Lys350 each bind ATP; that span reads LGMGGSGAM. Asp506 serves as the catalytic Proton acceptor.

The protein belongs to the protein kinase superfamily. Ser/Thr protein kinase family.

The protein resides in the membrane. It catalyses the reaction L-seryl-[protein] + ATP = O-phospho-L-seryl-[protein] + ADP + H(+). The enzyme catalyses L-threonyl-[protein] + ATP = O-phospho-L-threonyl-[protein] + ADP + H(+). The protein is Seven transmembrane domain-containing serine/threonine-protein kinase 2 (7tmk2) of Dictyostelium discoideum (Social amoeba).